The primary structure comprises 84 residues: Small ribosomal subunit protein uS17 (84 aa).

The protein belongs to the universal ribosomal protein uS17 family. As to quaternary structure, part of the 30S ribosomal subunit.

Its function is as follows. One of the primary rRNA binding proteins, it binds specifically to the 5'-end of 16S ribosomal RNA. The protein is Small ribosomal subunit protein uS17 of Klebsiella pneumoniae subsp. pneumoniae (strain ATCC 700721 / MGH 78578).